Consider the following 657-residue polypeptide: Regulator of MON1-CCZ1 complex (657 aa).

The Mic1 domain maps to 471–637 (NKEMPHKFVI…NFTPGEHCEE (167 aa)).

This sequence belongs to the RMC1 family. As to quaternary structure, found in a complex with RMC1, CCZ1, MON1A and MON1B. As to expression, highly expressed in heart, brain, spleen, lung, liver, skeletal muscle, kidney and testis.

Its subcellular location is the lysosome membrane. The protein localises to the late endosome membrane. Its function is as follows. Component of the CCZ1-MON1 RAB7A guanine exchange factor (GEF). Acts as a positive regulator of CCZ1-MON1A/B function necessary for endosomal/autophagic flux and efficient RAB7A localization. This chain is Regulator of MON1-CCZ1 complex (Rmc1), found in Mus musculus (Mouse).